A 603-amino-acid polypeptide reads, in one-letter code: UvrABC system protein C (603 aa).

The GIY-YIG domain occupies 15–92 (DQPGCYLMKD…IKKHDPRFNI (78 aa)). The UVR domain occupies 197–232 (KTVKNDLMKKMQVAAENMEFEKAGEFRDQINAIETT).

The protein belongs to the UvrC family. As to quaternary structure, interacts with UvrB in an incision complex.

The protein resides in the cytoplasm. The UvrABC repair system catalyzes the recognition and processing of DNA lesions. UvrC both incises the 5' and 3' sides of the lesion. The N-terminal half is responsible for the 3' incision and the C-terminal half is responsible for the 5' incision. The sequence is that of UvrABC system protein C from Listeria welshimeri serovar 6b (strain ATCC 35897 / DSM 20650 / CCUG 15529 / CIP 8149 / NCTC 11857 / SLCC 5334 / V8).